The chain runs to 270 residues: Glutamate racemase (270 aa).

Substrate contacts are provided by residues 14–15 (DS) and 46–47 (YG). The active-site Proton donor/acceptor is the Cys-77. 78–79 (NT) lines the substrate pocket. The active-site Proton donor/acceptor is the Cys-186. Residue 187 to 188 (TH) participates in substrate binding.

It belongs to the aspartate/glutamate racemases family.

It catalyses the reaction L-glutamate = D-glutamate. The protein operates within cell wall biogenesis; peptidoglycan biosynthesis. Its function is as follows. Provides the (R)-glutamate required for cell wall biosynthesis. The protein is Glutamate racemase of Trichodesmium erythraeum (strain IMS101).